The primary structure comprises 123 residues: Small ribosomal subunit protein eS25 (123 aa).

Positions 1 to 13 (MPPKKDTKGDSKK) are enriched in basic and acidic residues. Residues 1–34 (MPPKKDTKGDSKKGQKAKAGSGGGKAKKKKWSKG) are disordered. Residues 25 to 34 (KAKKKKWSKG) are compositionally biased toward basic residues.

The protein belongs to the eukaryotic ribosomal protein eS25 family.

This chain is Small ribosomal subunit protein eS25 (RPS25), found in Branchiostoma belcheri (Amphioxus).